Here is a 150-residue protein sequence, read N- to C-terminus: FAD synthase (150 aa).

ATP contacts are provided by residues 11–12 (TF), 16–19 (HPGH), D96, and Y124.

It belongs to the archaeal FAD synthase family. As to quaternary structure, homodimer. Requires a divalent metal cation as cofactor.

The enzyme catalyses FMN + ATP + H(+) = FAD + diphosphate. It participates in cofactor biosynthesis; FAD biosynthesis; FAD from FMN: step 1/1. In terms of biological role, catalyzes the transfer of the AMP portion of ATP to flavin mononucleotide (FMN) to produce flavin adenine dinucleotide (FAD) coenzyme. This chain is FAD synthase, found in Methanococcus maripaludis (strain DSM 14266 / JCM 13030 / NBRC 101832 / S2 / LL).